The chain runs to 593 residues: MILLENGVRVFPKPGMGKDIYIGLANFGFENDVPELLGVAHLLEHILISFDYTRFVANASTARTYMSFWCRALRAEDYLAALETAVSWFFARGALRTDFSRVRIRNYVRELENEYYFRNEVFHCMDILTFLGGGDLYNGGRLSMLEQLDAVRELLGKRMRRLAGPNVVIFVRELSPAALALLERSFGTLPRFPSTIPATRLGSIHNKAVLVPAPFYALLIQVDNTVENVLAVICLAESYHFVDYETLGERLYVSFAFVHEQDCEAFLRNVGELRFEPAPRVELNYSDDYVMNLYVNFPWLQHDLADYLYTLNADCVPLLRGLEENLRRSVRERQLVVVYPSFSPSLFNSRDRQDHRLLVLDVDLARSAGPARVPRTFRRQPRAEVFVRYGDPALLDYVAFALARPRAAALRRLPRGVRLAHGFSHADMHEIMASETFIKYSRSRPAALFQYIFLAFFATGRSIAEILERREALVSFDARRCVNRLVFAKRARYDVVTKSSFVCGVLRGPRLSEAALTRAMWELKRKGLLYSLEHTRMHAKHTFYVFAFSIYPEQVYRYFARWQLVSKHCCVVSMRGEREDYSALRKEVVVNFV.

Zn(2+) is bound at residue histidine 41. Residue glutamate 44 is part of the active site. A Zn(2+)-binding site is contributed by histidine 45.

It belongs to the peptidase M44 family. The cofactor is Zn(2+).

Its function is as follows. Seems to be involved in viral proteins maturation by cleavage at Ala-Gly-|-Xaa motifs. The sequence is that of Probable metalloendopeptidase G1-type from Homo sapiens (Human).